Consider the following 201-residue polypeptide: dITP/XTP pyrophosphatase (201 aa).

Substrate is bound at residue 8-13 (SNNPGK). Residues E40 and D69 each contribute to the Mg(2+) site. D69 serves as the catalytic Proton acceptor. Substrate-binding positions include S70, 155–158 (FGYD), K178, and 183–184 (HR).

Belongs to the HAM1 NTPase family. In terms of assembly, homodimer. The cofactor is Mg(2+).

The enzyme catalyses XTP + H2O = XMP + diphosphate + H(+). The catalysed reaction is dITP + H2O = dIMP + diphosphate + H(+). It carries out the reaction ITP + H2O = IMP + diphosphate + H(+). Pyrophosphatase that catalyzes the hydrolysis of nucleoside triphosphates to their monophosphate derivatives, with a high preference for the non-canonical purine nucleotides XTP (xanthosine triphosphate), dITP (deoxyinosine triphosphate) and ITP. Seems to function as a house-cleaning enzyme that removes non-canonical purine nucleotides from the nucleotide pool, thus preventing their incorporation into DNA/RNA and avoiding chromosomal lesions. The polypeptide is dITP/XTP pyrophosphatase (Ralstonia nicotianae (strain ATCC BAA-1114 / GMI1000) (Ralstonia solanacearum)).